The chain runs to 485 residues: Probable cobyric acid synthase (485 aa).

Residues 250 to 435 form the GATase cobBQ-type domain; the sequence is EIEVAVIRLP…LHGLFDNRNI (186 aa). C328 functions as the Nucleophile in the catalytic mechanism. Residue H427 is part of the active site.

It belongs to the CobB/CobQ family. CobQ subfamily.

It participates in cofactor biosynthesis; adenosylcobalamin biosynthesis. Its function is as follows. Catalyzes amidations at positions B, D, E, and G on adenosylcobyrinic A,C-diamide. NH(2) groups are provided by glutamine, and one molecule of ATP is hydrogenolyzed for each amidation. The sequence is that of Probable cobyric acid synthase from Methanosarcina mazei (strain ATCC BAA-159 / DSM 3647 / Goe1 / Go1 / JCM 11833 / OCM 88) (Methanosarcina frisia).